The primary structure comprises 404 residues: Cysteine desulfurase IscS (404 aa).

Residues 75–76, Asn-155, Gln-183, and 203–205 contribute to the pyridoxal 5'-phosphate site; these read AT and SGH. Residue Lys-206 is modified to N6-(pyridoxal phosphate)lysine. Thr-243 lines the pyridoxal 5'-phosphate pocket. Catalysis depends on Cys-328, which acts as the Cysteine persulfide intermediate. Residue Cys-328 coordinates [2Fe-2S] cluster.

It belongs to the class-V pyridoxal-phosphate-dependent aminotransferase family. NifS/IscS subfamily. As to quaternary structure, homodimer. Forms a heterotetramer with IscU, interacts with other sulfur acceptors. Requires pyridoxal 5'-phosphate as cofactor.

The protein localises to the cytoplasm. The catalysed reaction is (sulfur carrier)-H + L-cysteine = (sulfur carrier)-SH + L-alanine. Its pathway is cofactor biosynthesis; iron-sulfur cluster biosynthesis. In terms of biological role, master enzyme that delivers sulfur to a number of partners involved in Fe-S cluster assembly, tRNA modification or cofactor biosynthesis. Catalyzes the removal of elemental sulfur atoms from cysteine to produce alanine. Functions as a sulfur delivery protein for Fe-S cluster synthesis onto IscU, an Fe-S scaffold assembly protein, as well as other S acceptor proteins. The chain is Cysteine desulfurase IscS from Shewanella sp. (strain ANA-3).